The primary structure comprises 430 residues: Histidine--tRNA ligase (430 aa).

The protein belongs to the class-II aminoacyl-tRNA synthetase family. In terms of assembly, homodimer.

Its subcellular location is the cytoplasm. The enzyme catalyses tRNA(His) + L-histidine + ATP = L-histidyl-tRNA(His) + AMP + diphosphate + H(+). This Chlamydia abortus (strain DSM 27085 / S26/3) (Chlamydophila abortus) protein is Histidine--tRNA ligase.